The chain runs to 199 residues: Calcium-binding protein CAST (199 aa).

Residues methionine 1 to lysine 13 show a composition bias toward basic and acidic residues. The segment at methionine 1–leucine 31 is disordered. 4 consecutive EF-hand domains span residues leucine 36–aspartate 71, serine 75–glycine 110, glutamine 125–proline 160, and serine 163–proline 198. Ca(2+)-binding residues include aspartate 49, asparagine 51, aspartate 53, and glutamate 60. Residues aspartate 138, asparagine 140, aspartate 142, glutamate 149, aspartate 178, aspartate 180, arginine 182, and glutamate 187 each contribute to the Ca(2+) site.

Not known. Probably binds 3 calcium ions. This Solanum tuberosum (Potato) protein is Calcium-binding protein CAST.